The chain runs to 597 residues: Integrator complex subunit 11 (597 aa).

Residues H68, H70, D72, H73, H157, and D178 each coordinate Zn(2+). The HXHXDH motif signature appears at 68-73 (HFHLDH). E203 is a catalytic residue. H414 is a Zn(2+) binding site. K462 is a binding site for 1D-myo-inositol hexakisphosphate.

The protein belongs to the metallo-beta-lactamase superfamily. RNA-metabolizing metallo-beta-lactamase-like family. INTS11 subfamily. Belongs to the multiprotein complex Integrator, at least composed of IntS1, IntS2, IntS3, IntS4, omd/IntS5, IntS6, defl/IntS7, IntS8, IntS9, IntS10, IntS11, IntS12, asun/IntS13, IntS14 and IntS15. The core complex associates with protein phosphatase 2A subunits mts/PP2A and Pp2A-29B, to form the Integrator-PP2A (INTAC) complex. IntS11 is part of the RNA endonuclease subcomplex, composed of IntS4, IntS9, IntS11 and inositol hexakisphosphate (InsP6). Interacts with Brat1; interaction is required for the assembly of the RNA endonuclease subcomplex and inhibits the endonuclease activity of IntS11 before formation of mature integrator complex. The cofactor is Zn(2+). In terms of tissue distribution, expressed in neurons and glia of the larval and adult brain.

The protein localises to the nucleus. It is found in the cytoplasm. The protein resides in the cytosol. The RNA endonuclease activity is inhibited by Brat1 that forms hyrogen bond and hydrophobic interactions with the active site. In terms of biological role, RNA endonuclease component of the integrator complex, a multiprotein complex that terminates RNA polymerase II (Pol II) transcription in the promoter-proximal region of genes. The integrator complex provides a quality checkpoint during transcription elongation by driving premature transcription termination of transcripts that are unfavorably configured for transcriptional elongation: the complex terminates transcription by (1) catalyzing dephosphorylation of the C-terminal domain (CTD) of Pol II subunit Polr2A/Rbp1 and Spt5, and (2) degrading the exiting nascent RNA transcript via endonuclease activity. The integrator complex is also involved in the 3'-end processing of the U7 snRNA, and also the spliceosomal snRNAs U1, U2, U4 and U5. Within the integrator complex, IntS11 constitutes the RNA endonuclease subunit that degrades exiting nascent RNA transcripts. The protein is Integrator complex subunit 11 of Drosophila melanogaster (Fruit fly).